A 162-amino-acid polypeptide reads, in one-letter code: 2-C-methyl-D-erythritol 2,4-cyclodiphosphate synthase (162 aa).

2 residues coordinate a divalent metal cation: D10 and H12. Residues 10 to 12 (DVH) and 36 to 37 (HS) contribute to the 4-CDP-2-C-methyl-D-erythritol 2-phosphate site. H44 contacts a divalent metal cation. Residues 58–60 (DIG), 63–67 (FPDTD), 102–108 (AQAPRMA), 134–137 (TTSE), F141, and R144 contribute to the 4-CDP-2-C-methyl-D-erythritol 2-phosphate site.

This sequence belongs to the IspF family. Homotrimer. A divalent metal cation is required as a cofactor.

The enzyme catalyses 4-CDP-2-C-methyl-D-erythritol 2-phosphate = 2-C-methyl-D-erythritol 2,4-cyclic diphosphate + CMP. It participates in isoprenoid biosynthesis; isopentenyl diphosphate biosynthesis via DXP pathway; isopentenyl diphosphate from 1-deoxy-D-xylulose 5-phosphate: step 4/6. Functionally, involved in the biosynthesis of isopentenyl diphosphate (IPP) and dimethylallyl diphosphate (DMAPP), two major building blocks of isoprenoid compounds. Catalyzes the conversion of 4-diphosphocytidyl-2-C-methyl-D-erythritol 2-phosphate (CDP-ME2P) to 2-C-methyl-D-erythritol 2,4-cyclodiphosphate (ME-CPP) with a corresponding release of cytidine 5-monophosphate (CMP). The chain is 2-C-methyl-D-erythritol 2,4-cyclodiphosphate synthase from Chromohalobacter salexigens (strain ATCC BAA-138 / DSM 3043 / CIP 106854 / NCIMB 13768 / 1H11).